The following is a 363-amino-acid chain: UDP-N-acetylglucosamine--N-acetylmuramyl-(pentapeptide) pyrophosphoryl-undecaprenol N-acetylglucosamine transferase (363 aa).

UDP-N-acetyl-alpha-D-glucosamine contacts are provided by residues 10–12, Asn124, Ser195, Ile250, and Gln295; that span reads TGG.

Belongs to the glycosyltransferase 28 family. MurG subfamily.

The protein resides in the cell membrane. The catalysed reaction is di-trans,octa-cis-undecaprenyl diphospho-N-acetyl-alpha-D-muramoyl-L-alanyl-D-glutamyl-meso-2,6-diaminopimeloyl-D-alanyl-D-alanine + UDP-N-acetyl-alpha-D-glucosamine = di-trans,octa-cis-undecaprenyl diphospho-[N-acetyl-alpha-D-glucosaminyl-(1-&gt;4)]-N-acetyl-alpha-D-muramoyl-L-alanyl-D-glutamyl-meso-2,6-diaminopimeloyl-D-alanyl-D-alanine + UDP + H(+). It functions in the pathway cell wall biogenesis; peptidoglycan biosynthesis. Functionally, cell wall formation. Catalyzes the transfer of a GlcNAc subunit on undecaprenyl-pyrophosphoryl-MurNAc-pentapeptide (lipid intermediate I) to form undecaprenyl-pyrophosphoryl-MurNAc-(pentapeptide)GlcNAc (lipid intermediate II). This is UDP-N-acetylglucosamine--N-acetylmuramyl-(pentapeptide) pyrophosphoryl-undecaprenol N-acetylglucosamine transferase from Listeria monocytogenes serotype 4a (strain HCC23).